The sequence spans 95 residues: UPF0358 protein BT9727_3692 (95 aa).

It belongs to the UPF0358 family.

In Bacillus thuringiensis subsp. konkukian (strain 97-27), this protein is UPF0358 protein BT9727_3692.